A 30-amino-acid polypeptide reads, in one-letter code: Non-toxic phospholipase A2 (30 aa).

Ca(2+)-binding residues include Y26, G28, and G30.

This sequence belongs to the phospholipase A2 family. Group I subfamily. In terms of assembly, homodimer. It depends on Ca(2+) as a cofactor. Glycosylated. As to expression, expressed by the venom gland.

The protein resides in the secreted. It catalyses the reaction a 1,2-diacyl-sn-glycero-3-phosphocholine + H2O = a 1-acyl-sn-glycero-3-phosphocholine + a fatty acid + H(+). Its activity is regulated as follows. Enzymatic activity is diminished by Cd(2+) and Hg(2+). Its function is as follows. Relatively highly potent phospholipase A2 that displays potent antimicrobial and hemolytic activities. It does not show cytotoxic effects on the three human cell lines tested. PLA2 catalyzes the calcium-dependent hydrolysis of the 2-acyl groups in 3-sn-phosphoglycerides. It shows similar potencies on both Gram-negative and Gram-positive bacteria: B.cereus (MIC&gt;9 ug/ml), B.subtilis (MIC&gt;12 ug/ml), E.faecalis (MIC&gt;7 ug/ml), S.epidermidis (MIC&gt;12 ug/ml), S.aureux (MIC&gt;5 ug/ml), E.coli (MIC&gt;7 ug/ml), K.pneumonia (MIC&gt;8 ug/ml), P.aeruginosa (MIC&gt;10 ug/ml), and S.enteric (MIC&gt;9 ug/ml). It also shows antifungal activities: A.niger (MIC&gt;15 ug/ml), B.cinerea (MIC&gt;12 ug/ml), F.solani (MIC&gt;15 ug/ml), and P.digitatum (MIC&gt;10 ug/ml). This is Non-toxic phospholipase A2 from Walterinnesia aegyptia (Desert black snake).